Here is a 235-residue protein sequence, read N- to C-terminus: Phosphoribosylformylglycinamidine synthase subunit PurQ (235 aa).

Residues 3–234 (FGVLVFPGSN…LNSLMAQGVT (232 aa)) enclose the Glutamine amidotransferase type-1 domain. The active-site Nucleophile is the Cys86. Active-site residues include His203 and Glu205.

Part of the FGAM synthase complex composed of 1 PurL, 1 PurQ and 2 PurS subunits.

It is found in the cytoplasm. It catalyses the reaction N(2)-formyl-N(1)-(5-phospho-beta-D-ribosyl)glycinamide + L-glutamine + ATP + H2O = 2-formamido-N(1)-(5-O-phospho-beta-D-ribosyl)acetamidine + L-glutamate + ADP + phosphate + H(+). It carries out the reaction L-glutamine + H2O = L-glutamate + NH4(+). The protein operates within purine metabolism; IMP biosynthesis via de novo pathway; 5-amino-1-(5-phospho-D-ribosyl)imidazole from N(2)-formyl-N(1)-(5-phospho-D-ribosyl)glycinamide: step 1/2. Part of the phosphoribosylformylglycinamidine synthase complex involved in the purines biosynthetic pathway. Catalyzes the ATP-dependent conversion of formylglycinamide ribonucleotide (FGAR) and glutamine to yield formylglycinamidine ribonucleotide (FGAM) and glutamate. The FGAM synthase complex is composed of three subunits. PurQ produces an ammonia molecule by converting glutamine to glutamate. PurL transfers the ammonia molecule to FGAR to form FGAM in an ATP-dependent manner. PurS interacts with PurQ and PurL and is thought to assist in the transfer of the ammonia molecule from PurQ to PurL. The chain is Phosphoribosylformylglycinamidine synthase subunit PurQ from Acaryochloris marina (strain MBIC 11017).